The chain runs to 626 residues: Chaperone protein HtpG (626 aa).

Residues 1–339 (MSQNQETRGF…SNDLPLNVSR (339 aa)) are a; substrate-binding. The segment at 340–555 (EILQDNKITA…NDQMTTQMAK (216 aa)) is b. The tract at residues 556–626 (LFAAAGQPVP…FIKRINKLLG (71 aa)) is c.

This sequence belongs to the heat shock protein 90 family. As to quaternary structure, homodimer.

Its subcellular location is the cytoplasm. Functionally, molecular chaperone. Has ATPase activity. The polypeptide is Chaperone protein HtpG (Haemophilus influenzae (strain PittGG)).